We begin with the raw amino-acid sequence, 71 residues long: Small ribosomal subunit protein bS21 (71 aa).

This sequence belongs to the bacterial ribosomal protein bS21 family.

The sequence is that of Small ribosomal subunit protein bS21 from Ruthia magnifica subsp. Calyptogena magnifica.